Here is a 348-residue protein sequence, read N- to C-terminus: MGPRARPALFFLILLRTVAAQGRPPRSHSLRYLFMGASERDHGLPLFEALGYVDDELFVAYNHESRRAESRAQWVLGEAHSQLWLQLSQSLKGWDHMFIVDFWTIMDNHNHSKESHTLQVILGCEVQEDNSTRGFWMYGYDGQDHLEFCPETLDWRAAESRALTTKLEWEVNKIRAKQNRAYLERDCPEQLQWLLELGRGVLDQQVPPLVKVTHHVASAVTTLRCQALNFYPQNITMRWLKDRKPVDVKDAESKDVLPSGDGTYQSWVALAVPPGEEQRYTCQVEHPGLDQPLTATWEPSLSNTLVTGVISGIAVCVIIFLIGILFRILRKRQASRGAMGDYVLAECE.

Residues 1 to 22 (MGPRARPALFFLILLRTVAAQG) form the signal peptide. The tract at residues 23–114 (RPPRSHSLRY…IMDNHNHSKE (92 aa)) is alpha-1. Residues 23 to 306 (RPPRSHSLRY…WEPSLSNTLV (284 aa)) are Extracellular-facing. N110, N130, and N234 each carry an N-linked (GlcNAc...) asparagine glycan. Positions 115–205 (SHTLQVILGC…ELGRGVLDQQ (91 aa)) are alpha-2. 2 disulfide bridges follow: C124–C187 and C225–C282. Positions 206–297 (VPPLVKVTHH…GLDQPLTATW (92 aa)) are alpha-3. One can recognise an Ig-like C1-type domain in the interval 207-296 (PPLVKVTHHV…PGLDQPLTAT (90 aa)). A connecting peptide region spans residues 298-306 (EPSLSNTLV). Residues 307–330 (TGVISGIAVCVIIFLIGILFRILR) traverse the membrane as a helical segment. The Cytoplasmic segment spans residues 331 to 348 (KRQASRGAMGDYVLAECE).

Belongs to the MHC class I family. In terms of assembly, binds TFR through the extracellular domain in a pH-dependent manner.

The protein resides in the cell membrane. Its function is as follows. Binds to transferrin receptor (TFR) and reduces its affinity for iron-loaded transferrin. The chain is Hereditary hemochromatosis protein homolog (HFE) from Rhinoceros unicornis (Greater Indian rhinoceros).